Here is a 455-residue protein sequence, read N- to C-terminus: Adenylyltransferase and sulfurtransferase MOCS3 (455 aa).

Residues G90, D111, S118–R122, K135, and D179–N180 each bind ATP. An interaction with NFS1 region spans residues A156–N236. 2 residues coordinate Zn(2+): C220 and C223. Catalysis depends on C237, which acts as the Glycyl thioester intermediate; for adenylyltransferase activity. 2 residues coordinate Zn(2+): C295 and C298. C314 and C322 are disulfide-bonded. In terms of domain architecture, Rhodanese spans S345–P453. Residue C410 is the Cysteine persulfide intermediate; for sulfurtransferase activity of the active site. A Cysteine persulfide modification is found at C410.

The protein in the N-terminal section; belongs to the HesA/MoeB/ThiF family. UBA4 subfamily. As to quaternary structure, interacts with NFS1. Requires Zn(2+) as cofactor.

Its subcellular location is the cytoplasm. The protein localises to the cytosol. It catalyses the reaction [molybdopterin-synthase sulfur-carrier protein]-C-terminal Gly-Gly + ATP + H(+) = [molybdopterin-synthase sulfur-carrier protein]-C-terminal Gly-Gly-AMP + diphosphate. The enzyme catalyses [molybdopterin-synthase sulfur-carrier protein]-C-terminal Gly-Gly-AMP + S-sulfanyl-L-cysteinyl-[cysteine desulfurase] + AH2 = [molybdopterin-synthase sulfur-carrier protein]-C-terminal-Gly-aminoethanethioate + L-cysteinyl-[cysteine desulfurase] + A + AMP + 2 H(+). The protein operates within tRNA modification; 5-methoxycarbonylmethyl-2-thiouridine-tRNA biosynthesis. Its pathway is cofactor biosynthesis; molybdopterin biosynthesis. In terms of biological role, plays a central role in 2-thiolation of mcm(5)S(2)U at tRNA wobble positions of cytosolic tRNA(Lys), tRNA(Glu) and tRNA(Gln). Also essential during biosynthesis of the molybdenum cofactor. Acts by mediating the C-terminal thiocarboxylation of sulfur carriers URM1 and MOCS2A. Its N-terminus first activates URM1 and MOCS2A as acyl-adenylates (-COAMP), then the persulfide sulfur on the catalytic cysteine is transferred to URM1 and MOCS2A to form thiocarboxylation (-COSH) of their C-terminus. The reaction probably involves hydrogen sulfide that is generated from the persulfide intermediate and that acts as a nucleophile towards URM1 and MOCS2A. Subsequently, a transient disulfide bond is formed. Does not use thiosulfate as sulfur donor; NFS1 acting as a sulfur donor for thiocarboxylation reactions. The sequence is that of Adenylyltransferase and sulfurtransferase MOCS3 from Sus scrofa (Pig).